Reading from the N-terminus, the 344-residue chain is Photosystem II protein D1 (344 aa).

N-acetylthreonine is present on Thr-2. Position 2 is a phosphothreonine (Thr-2). A run of 3 helical transmembrane segments spans residues 29-46, 118-133, and 142-156; these read YIGWFGVLMFPLLLTATS, HFLLGVACYMGREWEL, and WIAVAYSAPVAAATA. A chlorophyll a-binding site is contributed by His-118. Tyr-126 is a pheophytin a binding site. [CaMn4O5] cluster is bound by residues Asp-170 and Glu-189. The helical transmembrane segment at 197–218 threads the bilayer; the sequence is FHMLGVAGVFGGSLFSAMHGSL. His-198 contacts chlorophyll a. A quinone-binding positions include His-215 and 264–265; that span reads SF. Residue His-215 coordinates Fe cation. His-272 provides a ligand contact to Fe cation. Residues 274 to 288 traverse the membrane as a helical segment; the sequence is FLAAWPVVCIWFTAL. Positions 332, 333, 342, and 344 each coordinate [CaMn4O5] cluster.

Belongs to the reaction center PufL/M/PsbA/D family. In terms of assembly, PSII is composed of 1 copy each of membrane proteins PsbA, PsbB, PsbC, PsbD, PsbE, PsbF, PsbH, PsbI, PsbJ, PsbK, PsbL, PsbM, PsbT, PsbX, PsbY, PsbZ, Psb30/Ycf12, at least 3 peripheral proteins of the oxygen-evolving complex and a large number of cofactors. It forms dimeric complexes. It depends on The D1/D2 heterodimer binds P680, chlorophylls that are the primary electron donor of PSII, and subsequent electron acceptors. It shares a non-heme iron and each subunit binds pheophytin, quinone, additional chlorophylls, carotenoids and lipids. D1 provides most of the ligands for the Mn4-Ca-O5 cluster of the oxygen-evolving complex (OEC). There is also a Cl(-1) ion associated with D1 and D2, which is required for oxygen evolution. The PSII complex binds additional chlorophylls, carotenoids and specific lipids. as a cofactor. Post-translationally, tyr-161 forms a radical intermediate that is referred to as redox-active TyrZ, YZ or Y-Z.

It is found in the plastid. Its subcellular location is the chloroplast thylakoid membrane. The catalysed reaction is 2 a plastoquinone + 4 hnu + 2 H2O = 2 a plastoquinol + O2. Functionally, photosystem II (PSII) is a light-driven water:plastoquinone oxidoreductase that uses light energy to abstract electrons from H(2)O, generating O(2) and a proton gradient subsequently used for ATP formation. It consists of a core antenna complex that captures photons, and an electron transfer chain that converts photonic excitation into a charge separation. The D1/D2 (PsbA/PsbD) reaction center heterodimer binds P680, the primary electron donor of PSII as well as several subsequent electron acceptors. The chain is Photosystem II protein D1 from Staurastrum punctulatum (Green alga).